The chain runs to 62 residues: Large ribosomal subunit protein bL28 (62 aa).

Belongs to the bacterial ribosomal protein bL28 family.

This is Large ribosomal subunit protein bL28 from Parafrankia sp. (strain EAN1pec).